The primary structure comprises 117 residues: uncharacterized protein (117 aa).

It localises to the cytoplasm. Its subcellular location is the nucleus. This is an uncharacterized protein from Schizosaccharomyces pombe (strain 972 / ATCC 24843) (Fission yeast).